Here is a 592-residue protein sequence, read N- to C-terminus: BTB/POZ domain-containing protein At5g03250 (592 aa).

The region spanning 28 to 98 (SDVTIEVGDM…CYGVKIELTA (71 aa)) is the BTB domain. In terms of domain architecture, NPH3 spans 217 to 502 (DWWFDDASFL…VQVLFFEQLR (286 aa)). Residue Tyr443 is modified to Phosphotyrosine.

This sequence belongs to the NPH3 family.

The protein operates within protein modification; protein ubiquitination. May act as a substrate-specific adapter of an E3 ubiquitin-protein ligase complex (CUL3-RBX1-BTB) which mediates the ubiquitination and subsequent proteasomal degradation of target proteins. This Arabidopsis thaliana (Mouse-ear cress) protein is BTB/POZ domain-containing protein At5g03250.